The chain runs to 215 residues: Probable phosphoglycerate mutase GpmB (215 aa).

Substrate-binding positions include 8-15 (RHGETEWN), 21-22 (QG), R58, 82-85 (ELDM), and 151-152 (GI). The active-site Tele-phosphohistidine intermediate is H9. Residue E82 is the Proton donor/acceptor of the active site.

It belongs to the phosphoglycerate mutase family. GpmB subfamily.

The catalysed reaction is (2R)-2-phosphoglycerate = (2R)-3-phosphoglycerate. The protein operates within carbohydrate degradation; glycolysis; pyruvate from D-glyceraldehyde 3-phosphate: step 3/5. In Proteus mirabilis (strain HI4320), this protein is Probable phosphoglycerate mutase GpmB.